The sequence spans 1012 residues: MTNLQDQTQQIVPFIRSLLMPTTGPASIPDDTLEKHTLRSETSTYNLTVGDTGSGLIVFFPGFPGSIVGAHYTLQSNGNYKFDQMLLTAQNLPASYNYCRLVSRSLTVRSSTLPGGVYALNGTINAVTFQGSLSELTDVSYNGLMSATANINDKIGNVLVGEGVTVLSLPTSYDLGYVRLGDPIPAIGLDPKMVATCDSSDRPRVYTITAADDYQFSSQYQAGGVTITLFSANIDAITSLSIGGELVFQTSVQGLILGATIYLIGFDGTAVITRAVAADNGLTAGTDNLMPFNIVIPTSEITQPITSIKLEIVTSKSGGQAGDQMSWSASGSLAVTIHGGNYPGALRPVTLVAYERVATGSVVTVAGVSNFELIPNPELAKNLVTEYGRFDPGAMNYTKLILSERDRLGIKTVWPTREYTDFREYFMEVADLNSPLKIAGAFGFKDIIRALRRIAVPVVSTLFPPAAPLAHAIGEGVDYLLGDEAQAASGTARAASGKARAASGRIRQLTLAADKGYEVVANLFQVPQNPVVDGILASPGILRGAHNLDCVLREGATLFPVVITTVEDAMTPKALNSKMFAVIEGVREDLQPPSQRGSFIRTLSGHRVYGYAPDGVLPLETGRVYTVVPIDGVWDDSIMLSKDPIPPIVGSSGNLAIAYMDVFRPKVPIHVAMTGALNAYGEIENVSFRSTKLATAHRLGLKLAGPGAFDVNTGSNWATFIKRFPHNPRDWDRLPYLNLPYLPPNAGRQYDLAMAASEFKETPELESAVRAMEAAANVDPLFQSALSVFMWLEENGIVTDMANFALSDPNAHRMRNFLANAPQAGSKSQRAKYGTAGYGVEARGPTPEGAQREKDTRISKKMETMGIYFATPEWVALNGHRGPSPGQLKYWQNTREIPDPNEDYLDYVHAEKSRLASEGQILRAATSIYGAPGQAEPPQAFIDEVAKVYEVNHGRGPNQEQMKDLLLTAMEMKHRNPRRAPPKPKPKPNVPTQRPPGRLGRWIRAVSDEDLE.

Residue Asp30 coordinates a divalent metal cation. In terms of domain architecture, Peptidase S50 spans 513-755; the sequence is ADKGYEVVAN…AGRQYDLAMA (243 aa). Catalysis depends on Ser652, which acts as the Nucleophile. The active site involves Lys692. The disordered stretch occupies residues 971 to 1012; sequence EMKHRNPRRAPPKPKPKPNVPTQRPPGRLGRWIRAVSDEDLE. A compositionally biased stretch (basic residues) spans 975–986; it reads RNPRRAPPKPKP. Residues 1003 to 1012 form an interaction with VP1 protein region; the sequence is IRAVSDEDLE.

As to quaternary structure, homotrimer. A central divalent metal stabilizes the VP2 trimer. Interacts with host ITGA4/ITGB1. Homodimer. Interacts (via C-terminus) with VP1 in the cytoplasm. Interacts with VP2. Post-translationally, specific enzymatic cleavages yield mature proteins. The capsid assembly seems to be regulated by polyprotein processing. The protease VP4 cleaves itself off the polyprotein, thus releasing pre-VP2 and VP3 within the infected cell. During capsid assembly, the C-terminus of pre-VP2 is further processed by VP4, giving rise to VP2, the external capsid protein and three small peptides that all stay closely associated with the capsid.

The protein localises to the virion. It is found in the host cytoplasm. Capsid protein VP2 self assembles to form an icosahedral capsid with a T=13 symmetry, about 70 nm in diameter, and consisting of 260 VP2 trimers. The capsid encapsulates the genomic dsRNA. VP2 is also involved in attachment and entry into the host cell by interacting with host ITGA4/ITGB1. Functionally, the precursor of VP2 plays an important role in capsid assembly. First, pre-VP2 and VP2 oligomers assemble to form a procapsid. Then, the pre-VP2 intermediates may be processed into VP2 proteins by proteolytic cleavage mediated by VP4 to obtain the mature virion. The final capsid is composed of pentamers and hexamers but VP2 has a natural tendency to assemble into all-pentameric structures. Therefore pre-VP2 may be required to allow formation of the hexameric structures. Its function is as follows. Protease VP4 is a serine protease that cleaves the polyprotein into its final products. Pre-VP2 is first partially cleaved, and may be completely processed by VP4 upon capsid maturation. In terms of biological role, capsid protein VP3 plays a key role in virion assembly by providing a scaffold for the capsid made of VP2. May self-assemble to form a T=4-like icosahedral inner-capsid composed of at least 180 trimers. Plays a role in genomic RNA packaging by recruiting VP1 into the capsid and interacting with the dsRNA genome segments to form a ribonucleoprotein complex. Additionally, the interaction of the VP3 C-terminal tail with VP1 removes the inherent structural blockade of the polymerase active site. Thus, VP3 can also function as a transcriptional activator. Structural peptide 1 is a small peptide derived from pre-VP2 C-terminus. It destabilizes and perforates cell membranes, suggesting a role during entry. Functionally, structural peptide 2 is a small peptide derived from pre-VP2 C-terminus. It is not essential for the virus viability, but viral growth is affected when missing. Its function is as follows. Structural peptide 3 is a small peptide derived from pre-VP2 C-terminus. It is not essential for the virus viability, but viral growth is affected when missing. The protein is Structural polyprotein of Avian infectious bursal disease virus (isolate Chicken/UK/UK661/1989) (IBDV).